The sequence spans 75 residues: MPNGVLGLGNPSRLAALYGLQLAHESQCCQMHNLPSAARQVTVACREEVGITTILAGRDECGVCDKTAGLDGAAP.

This is an uncharacterized protein from Mycobacterium tuberculosis (strain CDC 1551 / Oshkosh).